A 330-amino-acid polypeptide reads, in one-letter code: Alpha/beta hydrolase domain-containing protein VTE7 (330 aa).

Residues 84-315 form the AB hydrolase-1 domain; it reads VVLLHCFDSS…GHLPHVENPK (232 aa). The active-site Nucleophile is S157. Residues D279 and H307 each act as charge relay system in the active site.

This sequence belongs to the AB hydrolase superfamily.

Its subcellular location is the plastid. It is found in the chloroplast envelope. Functionally, hydrolase involved in tocopherol (vitamin E) biosynthesis. Releases prenyl alcohols from chlorophyll biosynthetic intermediates, which are then converted to the corresponding diphosphates for tocopherol biosynthesis. Provides most of the phytol from chlorophyll for tocopherol biosynthesis in seeds. The protein is Alpha/beta hydrolase domain-containing protein VTE7 of Arabidopsis thaliana (Mouse-ear cress).